The chain runs to 425 residues: MKNNKKAFEEACEYIAGGVDSPVRAFASVGSNPLFIKKGKGAYISDIEDNTYIDYVQSWGPLLFGHCDEDVEKACKKALEHGSSFGAPTLAETKLAKFILQDWPHLDKIRFVSSGTEATMSAIRLARGFSKKDKIIKFEGCYHGHSDSLLVSAGSGAATFNTPSSLGVLEDVAKNTLVAIYNDIDSVKNLVEKHSDIACIIIEPIAGNMGLVPAKKEFLQELQALCKKHQILLIFDEVMSGFRASYLGSYGIYNIQADIVTFGKVIGGGMPAAAFAARAEIMDLLSPLGGVYQAGTLSGNPLAMASGYASLKKARNYEGLYEKLEKLGKRLTQGLKEAANDCKIPLQVNCVGSMFGFFFCENPVNNYQDALKSDTKLFAKFHAQMLSKGIYLAPSQFETGFICESMDKKIIEKTIQAAQESFKTL.

Lysine 264 is subject to N6-(pyridoxal phosphate)lysine.

This sequence belongs to the class-III pyridoxal-phosphate-dependent aminotransferase family. HemL subfamily. Homodimer. It depends on pyridoxal 5'-phosphate as a cofactor.

It is found in the cytoplasm. The enzyme catalyses (S)-4-amino-5-oxopentanoate = 5-aminolevulinate. Its pathway is porphyrin-containing compound metabolism; protoporphyrin-IX biosynthesis; 5-aminolevulinate from L-glutamyl-tRNA(Glu): step 2/2. This Campylobacter lari (strain RM2100 / D67 / ATCC BAA-1060) protein is Glutamate-1-semialdehyde 2,1-aminomutase.